The sequence spans 185 residues: Ribonuclease HII (185 aa).

The RNase H type-2 domain maps to 1–185 (MKICGIDEAG…LKHLQGILEF (185 aa)). A divalent metal cation contacts are provided by Asp7, Glu8, and Asp96.

This sequence belongs to the RNase HII family. The cofactor is Mn(2+). Requires Mg(2+) as cofactor.

The protein resides in the cytoplasm. The enzyme catalyses Endonucleolytic cleavage to 5'-phosphomonoester.. In terms of biological role, endonuclease that specifically degrades the RNA of RNA-DNA hybrids. In Campylobacter hominis (strain ATCC BAA-381 / DSM 21671 / CCUG 45161 / LMG 19568 / NCTC 13146 / CH001A), this protein is Ribonuclease HII.